The primary structure comprises 433 residues: Arrestin domain-containing protein 1 (433 aa).

2 disordered regions span residues 296-322 (GLGLPPGAPPLVVPSAPPQEEAEAEAA) and 349-372 (LSSVPGAPEPCPQDGSPASHPLHP). Pro residues predominate over residues 301–312 (PGAPPLVVPSAP). Short sequence motifs (PPxY motif) lie at residues 402 to 405 (PPEY) and 415 to 418 (PPSY).

It belongs to the arrestin family. Interacts (via PPxY motifs) with ITCH (via WW domains); the interaction is direct and participates in the recruitment of the ubiquitin-protein ligase ITCH to the NOTCH1 receptor. Interacts with ARRB1 and ARRB2; the interaction is direct. Interacts with TSG101; may recruit TSG101 to the plasma membrane. Interacts (via PPxY motifs) with WWP2 (via WW domains); ubiquitinates ARRDC1. Interacts with SLC11A2; controls the incorporation of SLC11A2 into extracellular vesicles through an ubiquitination-dependent mechanism. Interacts with WWP1 (via WW domains). Interacts with NEDD4 (via WW domains). Interacts with PDCD6IP. Ubiquitinated. Ubiquitination by WWP2; promotes localization to extracellular microvesicles. Ubiquitinated by WWP1.

The protein localises to the cell membrane. Its function is as follows. Functions as an adapter recruiting ubiquitin-protein ligases to their specific substrates. Through an ubiquitination-dependent mechanism plays for instance a role in the incorporation of SLC11A2 into extracellular vesicles. More generally, plays a role in the extracellular transport of proteins between cells through the release in the extracellular space of microvesicles. By participating in the ITCH-mediated ubiquitination and subsequent degradation of NOTCH1, negatively regulates the NOTCH signaling pathway. The protein is Arrestin domain-containing protein 1 of Homo sapiens (Human).